The chain runs to 391 residues: Tryptophan synthase beta chain (391 aa).

At lysine 84 the chain carries N6-(pyridoxal phosphate)lysine.

The protein belongs to the TrpB family. As to quaternary structure, tetramer of two alpha and two beta chains. Pyridoxal 5'-phosphate serves as cofactor.

It catalyses the reaction (1S,2R)-1-C-(indol-3-yl)glycerol 3-phosphate + L-serine = D-glyceraldehyde 3-phosphate + L-tryptophan + H2O. It functions in the pathway amino-acid biosynthesis; L-tryptophan biosynthesis; L-tryptophan from chorismate: step 5/5. In terms of biological role, the beta subunit is responsible for the synthesis of L-tryptophan from indole and L-serine. The chain is Tryptophan synthase beta chain from Thermoanaerobacter pseudethanolicus (strain ATCC 33223 / 39E) (Clostridium thermohydrosulfuricum).